Here is a 288-residue protein sequence, read N- to C-terminus: Diaminopimelate epimerase (288 aa).

Substrate is bound by residues Asn-17, Gln-47, and Asn-67. The Proton donor role is filled by Cys-76. Residues 77–78 (GN), Asn-164, Asn-197, and 215–216 (ER) each bind substrate. The active-site Proton acceptor is Cys-224. 225–226 (GS) lines the substrate pocket.

Belongs to the diaminopimelate epimerase family. As to quaternary structure, homodimer.

It localises to the cytoplasm. It catalyses the reaction (2S,6S)-2,6-diaminopimelate = meso-2,6-diaminopimelate. It participates in amino-acid biosynthesis; L-lysine biosynthesis via DAP pathway; DL-2,6-diaminopimelate from LL-2,6-diaminopimelate: step 1/1. In terms of biological role, catalyzes the stereoinversion of LL-2,6-diaminopimelate (L,L-DAP) to meso-diaminopimelate (meso-DAP), a precursor of L-lysine and an essential component of the bacterial peptidoglycan. This Rhodopseudomonas palustris (strain BisA53) protein is Diaminopimelate epimerase.